A 521-amino-acid polypeptide reads, in one-letter code: AAA ATPase forming ring-shaped complexes (521 aa).

A coiled-coil region spans residues 4 to 44 (TEDLAALNDRLMAKNHALAEALSRAGKELTKAKSQLAQLAQ). 235-240 (GNGKTM) provides a ligand contact to ATP.

This sequence belongs to the AAA ATPase family. As to quaternary structure, homohexamer. Assembles into a hexameric ring structure.

The chain is AAA ATPase forming ring-shaped complexes from Bifidobacterium longum (strain NCC 2705).